Consider the following 813-residue polypeptide: MIFSKLGSSLARSSRSKGFVYGGGVRSAVFNQGRLRAPQNLEAAVNQVDGGLGFLRRHFASFAARKGLEAGDLSRAFANPRLRRFFSSQTPKKKNYENYYPKDSKKAPKNEQKSESRDGSKKNENENAGDAFSNEYQNMLIPLMAIALILSTFSLGSREQQQISFQEFKNKLLEAGLVDHIDVSNKEVAKVYVRSSPKSQTTEEVVQGPGNGVPAKGRGGQYKYYFNIGSVESFEEKLEEAQEAIGVNSHDFVPVTYVSETIWYQELLRFAPTLLLVATLIFGARRMQGGLGGLGGPGGKAGRGIFNIGKAQITRADKNSKNKIYFKDVAGCEEAKQEIMEFVHFLQNPKKYEDLGAKIPKGALLVGPPGTGKTLLAKATAGESAVPFLSISGSDFMEMFVGVGPSRVRNLFQEARQCAPSIIFIDEIDAIGRARGRGGFSGGNDERESTLNQLLVEMDGFGTTAGVVVLAGTNRPDILDKALLRPGRFDRQITIDKPDIKGRDQIFQIYLKKIKLDHEPSYYSQRLAALTPGFAGADIANVCNEAALIAARHEGATVTMAHFDSAIDRVIGGLEKKNRVISKLERRTVAYHESGHAVAGWFLEHAEPLLKVTIVPRGTAALGFAQYVPNENLLMTKEQLFDMTCMTLGGRAAEQVLIGRISTGAQNDLEKVTKMTYAQVAVYGFSDKIGLLSFPQREDEFSKPYSNRTGAMIDEEVREWVGKAYKRTVELIEEHKEQVAQIAELLLEKEVLHQDDLTKVLGERPFKSGETTNYDRFKSGFEESEKESQKESVPVKPVEDDGIPPLEPQVVPT.

Residues 1–86 (MIFSKLGSSL…FANPRLRRFF (86 aa)) constitute a mitochondrion transit peptide. Residues 93–129 (KKNYENYYPKDSKKAPKNEQKSESRDGSKKNENENAG) form a disordered region. A compositionally biased stretch (basic and acidic residues) spans 94 to 125 (KNYENYYPKDSKKAPKNEQKSESRDGSKKNEN). A helical transmembrane segment spans residues 139–157 (MLIPLMAIALILSTFSLGS). 367 to 374 (GPPGTGKT) contacts ATP. Residue histidine 592 coordinates Zn(2+). Glutamate 593 is a catalytic residue. Positions 596 and 668 each coordinate Zn(2+). Basic and acidic residues predominate over residues 764–790 (RPFKSGETTNYDRFKSGFEESEKESQK). The disordered stretch occupies residues 764-813 (RPFKSGETTNYDRFKSGFEESEKESQKESVPVKPVEDDGIPPLEPQVVPT).

The protein in the N-terminal section; belongs to the AAA ATPase family. This sequence in the C-terminal section; belongs to the peptidase M41 family. It depends on Zn(2+) as a cofactor.

It localises to the mitochondrion inner membrane. Functionally, probable ATP-dependent zinc metallopeptidase. Involved in the assembly and/or stability of the complexes I and V of the mitochondrial oxidative phosphorylation system. This Arabidopsis thaliana (Mouse-ear cress) protein is ATP-dependent zinc metalloprotease FTSH 10, mitochondrial (FTSH10).